Consider the following 182-residue polypeptide: Heat shock protein beta-2 (182 aa).

The 109-residue stretch at 55 to 163 folds into the sHSP domain; that stretch reads RAGEGARAGA…DTEVNEVYIS (109 aa).

The protein belongs to the small heat shock protein (HSP20) family. As to quaternary structure, interacts with DMPK; may enhance its kinase activity.

The protein resides in the cytoplasm. The protein localises to the nucleus. In terms of biological role, may regulate the kinase DMPK. The chain is Heat shock protein beta-2 (Hspb2) from Mus musculus (Mouse).